Reading from the N-terminus, the 610-residue chain is UvrABC system protein C (610 aa).

The GIY-YIG domain occupies 16–94 (SQPGVYRMYD…IKLYQPRYNV (79 aa)). The UVR domain occupies 204–239 (DQVLTQLIARMEKASQDLAFEEAARIRDQIQAVRRV).

The protein belongs to the UvrC family. Interacts with UvrB in an incision complex.

It is found in the cytoplasm. Its function is as follows. The UvrABC repair system catalyzes the recognition and processing of DNA lesions. UvrC both incises the 5' and 3' sides of the lesion. The N-terminal half is responsible for the 3' incision and the C-terminal half is responsible for the 5' incision. The protein is UvrABC system protein C of Salmonella agona (strain SL483).